The chain runs to 238 residues: ATP synthase subunit a (238 aa).

The next 5 membrane-spanning stretches (helical) occupy residues 18–38 (LTLLAVCIVTIAVIFAFVFWA), 76–96 (YSLLLFTIFLFVAVANNLGLF), 114–134 (NLAFDLALSLFITLMVHIEGV), 166–186 (SLAIRLFGNIFAGEVVTGLIV), and 193–213 (VYWWPIAFLVNMAWTAFSVFI).

It belongs to the ATPase A chain family. In terms of assembly, F-type ATPases have 2 components, CF(1) - the catalytic core - and CF(0) - the membrane proton channel. CF(1) has five subunits: alpha(3), beta(3), gamma(1), delta(1), epsilon(1). CF(0) has three main subunits: a(1), b(2) and c(9-12). The alpha and beta chains form an alternating ring which encloses part of the gamma chain. CF(1) is attached to CF(0) by a central stalk formed by the gamma and epsilon chains, while a peripheral stalk is formed by the delta and b chains.

Its subcellular location is the cell membrane. In terms of biological role, key component of the proton channel; it plays a direct role in the translocation of protons across the membrane. The chain is ATP synthase subunit a from Streptococcus pyogenes serotype M5 (strain Manfredo).